A 122-amino-acid polypeptide reads, in one-letter code: Large ribosomal subunit protein uL14 (122 aa).

The protein belongs to the universal ribosomal protein uL14 family. In terms of assembly, part of the 50S ribosomal subunit. Forms a cluster with proteins L3 and L19. In the 70S ribosome, L14 and L19 interact and together make contacts with the 16S rRNA in bridges B5 and B8.

Functionally, binds to 23S rRNA. Forms part of two intersubunit bridges in the 70S ribosome. The chain is Large ribosomal subunit protein uL14 from Lactococcus lactis subsp. lactis (strain IL1403) (Streptococcus lactis).